A 104-amino-acid chain; its full sequence is MAKQQIIRIRLKAFDHRLIDQSAREIVDTAKRTGAHVRGPIPLPTRKERFTILISPHVNKDARDQYEIRTHKRLMDIVDPTEKTVDALMKLDLAAGVDVQIKLT.

It belongs to the universal ribosomal protein uS10 family. As to quaternary structure, part of the 30S ribosomal subunit.

Involved in the binding of tRNA to the ribosomes. The protein is Small ribosomal subunit protein uS10 of Nitrosococcus oceani (strain ATCC 19707 / BCRC 17464 / JCM 30415 / NCIMB 11848 / C-107).